Consider the following 696-residue polypeptide: Verrucotoxin subunit beta (696 aa).

A B30.2/SPRY domain is found at 506 to 696; it reads HMPGVETIKD…GCTTESQWSN (191 aa).

The protein belongs to the SNTX/VTX toxin family. As to quaternary structure, tetramer composed of 2 alpha and 2 beta subunits. In terms of processing, glycosylated. In terms of tissue distribution, expressed by the venom gland.

The protein localises to the secreted. This lethal (towards mice) toxin induces hemolytic, cytolytic and hypotensive activities. Inhibits calcium channels and may activate ATP-sensitive potassium channels in frog atrial heart muscle. In guinea-pig ventricular myocytes, it modulates calcium channel activity through the beta-adrenoceptor-cAMP-PKA pathway (ADRB). This chain is Verrucotoxin subunit beta, found in Synanceia verrucosa (Reef stonefish).